The sequence spans 672 residues: Glycerophosphocholine phosphodiesterase GPCPD1 (672 aa).

The CBM20 domain maps to 1–113; the sequence is MTPSQVTFEI…IIIDDGQFGI (113 aa). Residues arginine 68 and 86 to 87 each bind substrate; that span reads HK. Serine 175 is subject to Phosphoserine. A GP-PDE domain is found at 318-618; it reads PLDVGHRGAG…DRIYDWMPEQ (301 aa). At tyrosine 608 the chain carries Phosphotyrosine.

The protein belongs to the glycerophosphoryl diester phosphodiesterase family.

It is found in the cytoplasm. Its subcellular location is the cytosol. It carries out the reaction sn-glycerol 3-phosphocholine + H2O = sn-glycerol 3-phosphate + choline + H(+). May be involved in the negative regulation of skeletal muscle differentiation, independently of its glycerophosphocholine phosphodiesterase activity. The protein is Glycerophosphocholine phosphodiesterase GPCPD1 (Gpcpd1) of Rattus norvegicus (Rat).